The sequence spans 205 residues: Rho-related GTP-binding protein RhoQ (205 aa).

Residue 16 to 23 (GDGAVGKT) coordinates GTP. The Effector region motif lies at 38 to 46 (YVPTVFDHY). Residues 63–67 (DTAGQ) and 121–124 (TQID) contribute to the GTP site. C202 is subject to Cysteine methyl ester. C202 is lipidated: S-farnesyl cysteine. A propeptide spans 203–205 (LIT) (removed in mature form).

Belongs to the small GTPase superfamily. Rho family. Interacts with EXO70, CDC42EP1, CDC42EP2 and CDC42EP3 in a GTP-dependent manner. Interacts with CDC42EP4, PARD6A, PARD6G (and probably PARD6B) in a GTP-dependent manner. Part of a quaternary complex containing PARD3, some PARD6 protein (PARD6A, PARD6B or PARD6G) and some atypical PKC protein (PRKCI or PRKCZ). Interacts with GOPC. Interacts with ARHGAP33/TCGAP. May be post-translationally modified by both palmitoylation and polyisoprenylation.

The protein localises to the cytoplasm. The protein resides in the cell membrane. Its activity is regulated as follows. Regulated by guanine nucleotide exchange factors (GEFs) which promote the exchange of bound GDP for free GTP, GTPase activating proteins (GAPs) which increase the GTP hydrolysis activity, and GDP dissociation inhibitors which inhibit the dissociation of the nucleotide from the GTPase. Functionally, plasma membrane-associated small GTPase which cycles between an active GTP-bound and an inactive GDP-bound state. In active state binds to a variety of effector proteins to regulate cellular responses. Involved in epithelial cell polarization processes. May play a role in CFTR trafficking to the plasma membrane. Causes the formation of thin, actin-rich surface projections called filopodia. This chain is Rho-related GTP-binding protein RhoQ (Rhoq), found in Mus musculus (Mouse).